A 109-amino-acid chain; its full sequence is Protein FAM32A-like (109 aa).

A disordered region spans residues 1-48 (MSEYKSVQKGSLKLKGVSLPSKKKKKKNKEMKRLEEQVLTSENEEGTK). The span at 9–20 (KGSLKLKGVSLP) shows a compositional bias: low complexity. The span at 21 to 30 (SKKKKKKNKE) shows a compositional bias: basic residues.

It belongs to the FAM32 family.

It is found in the nucleus. Its function is as follows. May induce G2 arrest and apoptosis. May also increase cell sensitivity to apoptotic stimuli. This chain is Protein FAM32A-like (fam32al), found in Danio rerio (Zebrafish).